The sequence spans 236 residues: Transcriptional regulatory protein RprY (236 aa).

Residues 9–123 (RILLCEDDEN…ELTFRIEAIL (115 aa)) enclose the Response regulatory domain. 4-aspartylphosphate is present on D58. Residues 134–231 (SNVYKIGKFT…IHGKGYKLIT (98 aa)) constitute a DNA-binding region (ompR/PhoB-type).

Phosphorylated by RprX.

It localises to the cytoplasm. Functionally, member of the two-component regulatory system RprX/RprY. In Bacteroides fragilis (strain YCH46), this protein is Transcriptional regulatory protein RprY (rprY).